Here is a 916-residue protein sequence, read N- to C-terminus: Isoleucine--tRNA ligase (916 aa).

Positions Pro57–His67 match the 'HIGH' region motif. Glu554 provides a ligand contact to L-isoleucyl-5'-AMP. Positions Lys595–Ser599 match the 'KMSKS' region motif. Lys598 is a binding site for ATP. 4 residues coordinate Zn(2+): Cys885, Cys888, Cys905, and Cys908.

This sequence belongs to the class-I aminoacyl-tRNA synthetase family. IleS type 1 subfamily. As to quaternary structure, monomer. It depends on Zn(2+) as a cofactor.

The protein localises to the cytoplasm. It catalyses the reaction tRNA(Ile) + L-isoleucine + ATP = L-isoleucyl-tRNA(Ile) + AMP + diphosphate. Functionally, catalyzes the attachment of isoleucine to tRNA(Ile). As IleRS can inadvertently accommodate and process structurally similar amino acids such as valine, to avoid such errors it has two additional distinct tRNA(Ile)-dependent editing activities. One activity is designated as 'pretransfer' editing and involves the hydrolysis of activated Val-AMP. The other activity is designated 'posttransfer' editing and involves deacylation of mischarged Val-tRNA(Ile). The chain is Isoleucine--tRNA ligase (ileS) from Staphylococcus epidermidis (strain ATCC 35984 / DSM 28319 / BCRC 17069 / CCUG 31568 / BM 3577 / RP62A).